We begin with the raw amino-acid sequence, 1239 residues long: Inner tegument protein (1239 aa).

Disordered stretches follow at residues 1 to 20 (MASA…DAQP), 669 to 704 (GESP…GGGP), 959 to 980 (RPPP…DTPP), and 1087 to 1239 (GRNA…AEDE). The interaction with large tegument protein stretch occupies residues 615-1239 (NELPKTRSLA…RPPRPTAEDE (625 aa)). Positions 1112–1123 (DSSPFSFSSSDF) are enriched in low complexity. Residues 1139-1148 (VPGGGGGGEG) show a composition bias toward gly residues. Basic and acidic residues predominate over residues 1151–1170 (EEERERPSDIDTAARARKVE). The span at 1180–1189 (RTTPSPSRRA) shows a compositional bias: low complexity. The segment covering 1219–1232 (VRPRTRRGATRRPP) has biased composition (basic residues).

It belongs to the herpesviridae inner tegument protein family. Interacts (via C-terminus) with the large tegument protein/LTP (via N-terminus).

Its subcellular location is the virion tegument. It is found in the host cytoplasm. The protein resides in the host nucleus. The protein localises to the host Golgi apparatus. It localises to the host trans-Golgi network. Plays an essential role in cytoplasmic secondary envelopment during viral egress. Interacts with the capsid via the large tegument protein/LTP and participates in its transport to the host trans-Golgi network (TGN) where secondary envelopment occurs. Modulates tegumentation and capsid accumulation at the viral assembly complex. The chain is Inner tegument protein from Homo sapiens (Human).